The primary structure comprises 284 residues: Putative cysteine-rich repeat secretory protein 7 (284 aa).

The first 24 residues, 1 to 24, serve as a signal peptide directing secretion; it reads MARIILTAPLFYFFFSLLSHQTMS. Gnk2-homologous domains lie at 26-128 and 134-244; these read PQHM…NVSF and SKPV…TFVL. Residues 247 to 284 are disordered; sequence PAPSPSSLPPISPTSSPPLSLPPQLPPPLSQPPPPLST.

The protein belongs to the cysteine-rich repeat secretory protein family.

It localises to the secreted. The protein is Putative cysteine-rich repeat secretory protein 7 (CRRSP7) of Arabidopsis thaliana (Mouse-ear cress).